The primary structure comprises 274 residues: Diaminopimelate epimerase (274 aa).

3 residues coordinate substrate: N11, Q44, and N64. Residue C73 is the Proton donor of the active site. Residues 74-75, N157, N190, and 208-209 contribute to the substrate site; these read GN and ER. The active-site Proton acceptor is the C217. Residue 218-219 participates in substrate binding; that stretch reads GS.

It belongs to the diaminopimelate epimerase family. In terms of assembly, homodimer.

It is found in the cytoplasm. It carries out the reaction (2S,6S)-2,6-diaminopimelate = meso-2,6-diaminopimelate. It participates in amino-acid biosynthesis; L-lysine biosynthesis via DAP pathway; DL-2,6-diaminopimelate from LL-2,6-diaminopimelate: step 1/1. In terms of biological role, catalyzes the stereoinversion of LL-2,6-diaminopimelate (L,L-DAP) to meso-diaminopimelate (meso-DAP), a precursor of L-lysine and an essential component of the bacterial peptidoglycan. This Shigella flexneri serotype 5b (strain 8401) protein is Diaminopimelate epimerase.